Here is a 114-residue protein sequence, read N- to C-terminus: MGSRPWALGLFCCCSSCFCLCCSRHRPVSRLAAVVGGAAAVPAVVSGVTGLILSPSQSPIFIQPTPSPRMSPLRPGLDLVFANPSDHSAPLGATRPSAPPLPHVVDLPQLGPRR.

Hydrophobic regions lie at residues 6-24 (WALGLFCCCSSCFCLCCSR) and 33-53 (AVVGGAAAVPAVVSGVTGLIL). Residues 28 to 68 (VSRLAAVVGGAAAVPAVVSGVTGLILSPSQSPIFIQPTPSP) are interaction with host HPX. Residues 48–72 (VTGLILSPSQSPIFIQPTPSPRMSP) are interaction with the capsid protein. Residue Ser-71 is modified to Phosphoserine; by host. The homodimerization, and interaction with host AMBP/bikunin stretch occupies residues 72-114 (PLRPGLDLVFANPSDHSAPLGATRPSAPPLPHVVDLPQLGPRR). A disordered region spans residues 85 to 114 (SDHSAPLGATRPSAPPLPHVVDLPQLGPRR). Residues 95–104 (RPSAPPLPHV) form an interaction with host SRC, HCK, FYN, PIK3R3 and GRB2 region. A PTAP/PSAP motif motif is present at residues 96-99 (PSAP).

Belongs to the hepevirus ORF3 protein family. Forms homooligomers. Interacts with host SRC, HCK, FYN, PIK3R3 and GRB2 (via SH3 domain); binding does not activate the kinases. Interacts with host AMBP/bikunin and AMBP/alpha-1-microglobulin peptides. Interacts with host HPX/hemopexin. Interacts (when phosphorylated) with capsid protein ORF2. Interacts with host TSG101; this interaction plays a role in viral release from the host cell. Interacts with host SIRPA; this interaction down-regulates the phosphorylation of host IRF3. In terms of processing, palmitoylated in the N-terminus.

It localises to the host endoplasmic reticulum membrane. The protein localises to the host cytoplasm. It is found in the host cytoskeleton. The protein resides in the virion. Its subcellular location is the host cell membrane. Small multifunctional phosphoprotein involved in virion morphogenesis, egress and counteracting host innate immunity. Plays critical roles in the final steps of viral release by interacting with host TSG101, a member of the vacuolar protein-sorting pathway and using other cellular host proteins involved in vesicle formation pathway. Also acts as a viroporin and forms ion conductive pores allowing viral particle release. Impairs the generation of type I interferon by down-regulating host TLR3 and TLR7 as well as their downstream signaling pathways. Down-regulates the phosphorylation of host IRF3 via the interaction with host SIRP-alpha, thereby inhibiting IFN-I expression. Interacts with host microtubules. In Hepatitis E virus genotype 1 (isolate Human/India/Hyderabad) (HEV-1), this protein is Protein ORF3.